A 286-amino-acid polypeptide reads, in one-letter code: Glycine--tRNA ligase alpha subunit (286 aa).

It belongs to the class-II aminoacyl-tRNA synthetase family. In terms of assembly, tetramer of two alpha and two beta subunits.

The protein localises to the cytoplasm. The catalysed reaction is tRNA(Gly) + glycine + ATP = glycyl-tRNA(Gly) + AMP + diphosphate. This chain is Glycine--tRNA ligase alpha subunit (glyQ), found in Thermotoga maritima (strain ATCC 43589 / DSM 3109 / JCM 10099 / NBRC 100826 / MSB8).